The chain runs to 265 residues: Synaptoporin (265 aa).

At 1–4 the chain is on the cytoplasmic side; sequence MCMV. The MARVEL domain occupies 1-202; the sequence is MCMVIFAPLF…NIWFVFKETG (202 aa). A helical membrane pass occupies residues 5–25; that stretch reads IFAPLFAIFAFATCGGYSGGL. Over 26 to 81 the chain is Vesicular; it reads RLSVDCVNKTESNLSIDIAFAYPFRLHQVTFEVPTCEGKERQKLALVGDSSSSAEF. N-linked (GlcNAc...) asparagine glycosylation is found at Asn33 and Asn38. A helical membrane pass occupies residues 82 to 102; the sequence is FVTVAVFAFLYSLAATVVYIF. At 103–114 the chain is on the cytoplasmic side; the sequence is FQNKYRENNRGP. Residues 115 to 135 traverse the membrane as a helical segment; sequence LIDFIVTVVFSFLWLVGSSAW. The Vesicular portion of the chain corresponds to 136 to 177; sequence AKGLSDVKVATDPKEVLLLMSACKQPSNKCMAVHSPVMSSLN. An N-linked (GlcNAc...) asparagine glycan is attached at Asn177. Residues 178-198 traverse the membrane as a helical segment; that stretch reads TSVVFGFLNFILWAGNIWFVF. At 199–265 the chain is on the cytoplasmic side; it reads KETGWHSSGQ…SGPTSFNNQI (67 aa). Repeat 1 spans residues 210–214; sequence YLSDP. Residues 210–242 are 5 X approximate repeats; sequence YLSDPMEKHSSSYNQGGYNQDSYGSSGGYSQQA. 2 positions are modified to phosphoserine: Ser212 and Ser220. The segment at 221 to 265 is disordered; it reads SYNQGGYNQDSYGSSGGYSQQASLGPTSDEFGQQPSGPTSFNNQI. A run of 4 repeats spans residues 222–226, 227–231, 232–236, and 238–242. Positions 224 to 243 are enriched in low complexity; the sequence is QGGYNQDSYGSSGGYSQQAS. Polar residues predominate over residues 244-265; it reads LGPTSDEFGQQPSGPTSFNNQI.

It belongs to the synaptophysin/synaptobrevin family. Central nervous system.

It is found in the cytoplasmic vesicle. The protein localises to the secretory vesicle. Its subcellular location is the synaptic vesicle membrane. It localises to the synapse. The protein resides in the synaptosome. In terms of biological role, intrinsic membrane protein of small synaptic vesicles. Probable vesicular channel protein. In Rattus norvegicus (Rat), this protein is Synaptoporin (Synpr).